The sequence spans 132 residues: Interleukin-5 (132 aa).

Positions 1 to 17 (MRLPLQLSILTLAWVWA) are cleaved as a signal peptide. 3 N-linked (GlcNAc...) asparagine glycosylation sites follow: asparagine 45, asparagine 74, and asparagine 88.

This sequence belongs to the IL-5 family. Homodimer; disulfide-linked. Interacts with IL5RA. Interacts with CSF2RB.

It is found in the secreted. Homodimeric cytokine expressed predominantly by T-lymphocytes and NK cells that plays an important role in the survival, differentiation, and chemotaxis of eosinophils. Also acts on activated and resting B-cells to induce immunoglobulin production, growth, and differentiation. Mechanistically, exerts its biological effects through a receptor composed of IL5RA subunit and the cytokine receptor common subunit beta/CSF2RB. Binding to the receptor leads to activation of various kinases including LYN, SYK and JAK2 and thereby propagates signals through the RAS-MAPK and JAK-STAT5 pathways respectively. The protein is Interleukin-5 (IL5) of Meriones unguiculatus (Mongolian jird).